Consider the following 151-residue polypeptide: Ribonuclease H (151 aa).

The region spanning 1–141 (MQEVTVYSDG…ADALANKGVE (141 aa)) is the RNase H type-1 domain. Positions 9, 47, 69, and 133 each coordinate Mg(2+).

It belongs to the RNase H family. Monomer. It depends on Mg(2+) as a cofactor.

The protein resides in the cytoplasm. It catalyses the reaction Endonucleolytic cleavage to 5'-phosphomonoester.. Functionally, endonuclease that specifically degrades the RNA of RNA-DNA hybrids. This is Ribonuclease H from Ralstonia nicotianae (strain ATCC BAA-1114 / GMI1000) (Ralstonia solanacearum).